A 208-amino-acid polypeptide reads, in one-letter code: GATA transcription factor 29 (208 aa).

Residues 155–208 (GMKKCTNMNCNALNTPMWRRGPLGPKSLCNACGIKFRKEEERKAKRNVVIVLDD) form a GATA-type; atypical zinc finger.

Belongs to the type IV zinc-finger family. Class B subfamily.

The protein localises to the nucleus. In terms of biological role, transcriptional regulator that specifically binds 5'-GATA-3' or 5'-GAT-3' motifs within gene promoters. This is GATA transcription factor 29 (GATA29) from Arabidopsis thaliana (Mouse-ear cress).